A 363-amino-acid chain; its full sequence is GDSL esterase/lipase At3g14220 (363 aa).

The N-terminal stretch at 1–28 is a signal peptide; the sequence is MAKNRNLVFFLGVLASFTLSSFPVTVSG. Residue Ser-39 is the Nucleophile of the active site. Catalysis depends on residues Asp-318 and His-321.

This sequence belongs to the 'GDSL' lipolytic enzyme family.

It localises to the secreted. The chain is GDSL esterase/lipase At3g14220 from Arabidopsis thaliana (Mouse-ear cress).